The chain runs to 353 residues: Rhodopsin (353 aa).

The Extracellular segment spans residues 1–36 (MNGTEGDNFYVPFSNKTGLARSPYEYPQYYLAEPWK). N-linked (GlcNAc...) asparagine glycans are attached at residues Asn-2 and Asn-15. The chain crosses the membrane as a helical span at residues 37-61 (YSALAAYMFFLILVGFPVNFLTLFV). At 62–73 (TVQHKKLRTPLN) the chain is on the cytoplasmic side. Residues 74–96 (YILLNLAMANLFMVLFGFTVTMY) traverse the membrane as a helical segment. Over 97–110 (TSMNGYFVFGPTMC) the chain is Extracellular. The cysteines at positions 110 and 187 are disulfide-linked. Residues 111–133 (SIEGFFATLGGEVALWSLVVLAI) traverse the membrane as a helical segment. Residues 134–136 (ERY) carry the 'Ionic lock' involved in activated form stabilization motif. Topologically, residues 134–152 (ERYIVICKPMGNFRFGNTH) are cytoplasmic. Residues 153 to 173 (AIMGVAFTWIMALACAAPPLV) traverse the membrane as a helical segment. The Extracellular segment spans residues 174-202 (GWSRYIPEGMQCSCGPDYYTLNPNFNNES). Residues 203–224 (YVVYMFVVHFLVPFVIIFFCYG) form a helical membrane-spanning segment. Topologically, residues 225–252 (RLLCTVKEAAAAQQESASTQKAEKEVTR) are cytoplasmic. A helical membrane pass occupies residues 253-274 (MVVLMVIGFLVCWVPYASVAFY). Residues 275 to 286 (IFTHQGSDFGAT) lie on the Extracellular side of the membrane. A helical membrane pass occupies residues 287-308 (FMTLPAFFAKSSALYNPVIYIL). Lys-296 carries the N6-(retinylidene)lysine modification. Over 309–353 (MNKQFRNCMITTLCCGKNPLGDDESGASTSKTEVSSVSTSPVSPA) the chain is Cytoplasmic. The segment at 330–353 (DDESGASTSKTEVSSVSTSPVSPA) is disordered. Residues 336–353 (STSKTEVSSVSTSPVSPA) are compositionally biased toward low complexity.

Belongs to the G-protein coupled receptor 1 family. Opsin subfamily. In terms of processing, phosphorylated on some or all of the serine and threonine residues present in the C-terminal region. Contains one covalently linked retinal chromophore. Short photoreceptor cells.

Its subcellular location is the membrane. It localises to the cell projection. The protein localises to the cilium. The protein resides in the photoreceptor outer segment. In terms of biological role, photoreceptor required for image-forming vision at low light intensity. While most salt water fish species use retinal as chromophore, most freshwater fish use 3-dehydroretinal, or a mixture of retinal and 3-dehydroretinal. Light-induced isomerization of 11-cis to all-trans retinal triggers a conformational change that activates signaling via G-proteins. Subsequent receptor phosphorylation mediates displacement of the bound G-protein alpha subunit by arrestin and terminates signaling. The polypeptide is Rhodopsin (RHO) (Lethenteron camtschaticum (Japanese lamprey)).